Reading from the N-terminus, the 335-residue chain is E3 ubiquitin ligase rnf-121 (335 aa).

Residues Met1 to His47 lie on the Cytoplasmic side of the membrane. The chain crosses the membrane as a helical span at residues Met48 to Trp68. The Lumenal segment spans residues Lys69 to His72. Residues Phe73–Phe93 traverse the membrane as a helical segment. At Asn94–Arg99 the chain is on the cytoplasmic side. The helical transmembrane segment at Phe100–Ala120 threads the bilayer. Residues Gln121 to Tyr143 lie on the Lumenal side of the membrane. Residues Val144 to Phe164 form a helical membrane-spanning segment. Residues Gly165–Gln168 are Cytoplasmic-facing. Residues Pro169–Gly189 form a helical membrane-spanning segment. Residues Arg190–Glu335 are Lumenal-facing. The segment at Cys222–Lys284 adopts an RING-type; atypical zinc-finger fold.

The protein belongs to the RNF121 family. In terms of tissue distribution, expressed in body wall muscles, the hypodermis, seam cells, vulval cells, spermathecal cells, uterine cells and the distal tip cell (at protein level).

Its subcellular location is the endoplasmic reticulum membrane. The protein resides in the golgi apparatus membrane. It catalyses the reaction S-ubiquitinyl-[E2 ubiquitin-conjugating enzyme]-L-cysteine + [acceptor protein]-L-lysine = [E2 ubiquitin-conjugating enzyme]-L-cysteine + N(6)-ubiquitinyl-[acceptor protein]-L-lysine.. It functions in the pathway protein modification; protein ubiquitination. Its function is as follows. E3 ubiquitin ligase which accepts ubiquitin and transfers it to substrates such as the beta-integrin subunit pat-3, promoting their degradation by the endoplasmic reticulum-associated degradation (ERAD) pathway which is a pathway involved in ubiquitin-dependent degradation of misfolded endoplasmic reticulum proteins. Negatively regulates the unfolded protein response to reduce endoplasmic reticulum stress. Required for the cessation of distal tip cell migration at the end of larval morphogenesis. Plays a role in germline and gonad development. This Caenorhabditis elegans protein is E3 ubiquitin ligase rnf-121.